A 124-amino-acid polypeptide reads, in one-letter code: Apolipoprotein C-IV (124 aa).

A signal peptide spans 1-27 (MSLLRCRQQTLPSLCLSVLFLACFVAS).

It belongs to the apolipoprotein C4 family.

The protein resides in the secreted. May participate in lipoprotein metabolism. This chain is Apolipoprotein C-IV (Apoc4), found in Rattus norvegicus (Rat).